Consider the following 195-residue polypeptide: Nucleoid occlusion factor SlmA (195 aa).

An HTH tetR-type domain is found at 7–67 (TNRRAQILQA…GLIEFIEETL (61 aa)). The segment at residues 30 to 49 (TTAKLAEKVGVSEAALYRHF) is a DNA-binding region (H-T-H motif). A coiled-coil region spans residues 109–141 (DALMGEQDRLRARIAKLFERLETQLKQVLRERK).

Belongs to the nucleoid occlusion factor SlmA family. As to quaternary structure, homodimer. Interacts with FtsZ.

It is found in the cytoplasm. The protein localises to the nucleoid. Its function is as follows. Required for nucleoid occlusion (NO) phenomenon, which prevents Z-ring formation and cell division over the nucleoid. Acts as a DNA-associated cell division inhibitor that binds simultaneously chromosomal DNA and FtsZ, and disrupts the assembly of FtsZ polymers. SlmA-DNA-binding sequences (SBS) are dispersed on non-Ter regions of the chromosome, preventing FtsZ polymerization at these regions. In Alteromonas mediterranea (strain DSM 17117 / CIP 110805 / LMG 28347 / Deep ecotype), this protein is Nucleoid occlusion factor SlmA.